Consider the following 557-residue polypeptide: 2-succinyl-5-enolpyruvyl-6-hydroxy-3-cyclohexene-1-carboxylate synthase (557 aa).

Belongs to the TPP enzyme family. MenD subfamily. In terms of assembly, homodimer. Requires Mg(2+) as cofactor. The cofactor is Mn(2+). It depends on thiamine diphosphate as a cofactor.

It carries out the reaction isochorismate + 2-oxoglutarate + H(+) = 5-enolpyruvoyl-6-hydroxy-2-succinyl-cyclohex-3-ene-1-carboxylate + CO2. It participates in quinol/quinone metabolism; 1,4-dihydroxy-2-naphthoate biosynthesis; 1,4-dihydroxy-2-naphthoate from chorismate: step 2/7. Its pathway is quinol/quinone metabolism; menaquinone biosynthesis. Functionally, catalyzes the thiamine diphosphate-dependent decarboxylation of 2-oxoglutarate and the subsequent addition of the resulting succinic semialdehyde-thiamine pyrophosphate anion to isochorismate to yield 2-succinyl-5-enolpyruvyl-6-hydroxy-3-cyclohexene-1-carboxylate (SEPHCHC). In Yersinia enterocolitica serotype O:8 / biotype 1B (strain NCTC 13174 / 8081), this protein is 2-succinyl-5-enolpyruvyl-6-hydroxy-3-cyclohexene-1-carboxylate synthase.